We begin with the raw amino-acid sequence, 75 residues long: RNA-binding protein KhpA (75 aa).

The KH domain occupies 29 to 75 (SIILELKVSPEDMGKVIGKQGRIAKAIRTVVKAAAIKENKKVVVEII).

The protein belongs to the KhpA RNA-binding protein family. Forms a complex with KhpB.

The protein resides in the cytoplasm. Functionally, a probable RNA chaperone. Forms a complex with KhpB which binds to cellular RNA and controls its expression. Plays a role in peptidoglycan (PG) homeostasis and cell length regulation. The sequence is that of RNA-binding protein KhpA from Clostridium perfringens (strain 13 / Type A).